Consider the following 440-residue polypeptide: Transposon Ty1-NL1 Gag polyprotein (440 aa).

Composition is skewed to polar residues over residues 1–23, 48–60, 71–86, and 131–152; these read MESQ…SVTS, TKAN…TPAS, SPQT…GPYQ, and PQYP…GNTF. Disordered stretches follow at residues 1–86, 131–171, and 350–425; these read MESQ…GPYQ, PQYP…YVRP, and QQES…TEPI. Low complexity predominate over residues 153–165; that stretch reads TDSSSADSDMTST. Residues 299–401 are RNA-binding; sequence NNGIPINNKV…NSQSRTARAH (103 aa). The span at 363–372 shows a compositional bias: basic and acidic residues; that stretch reads NPSDEKKDSR. Residues 373 to 412 show a composition bias toward polar residues; it reads TYTNTTKPKSITRNSQKPNNSQSRTARAHNVSTSNNSSGP.

Homotrimer.

The protein resides in the cytoplasm. Capsid protein (CA) is the structural component of the virus-like particle (VLP), forming the shell that encapsulates the retrotransposons dimeric RNA genome. The particles are assembled from trimer-clustered units and there are holes in the capsid shells that allow for the diffusion of macromolecules. CA also has nucleocapsid-like chaperone activity, promoting primer tRNA(i)-Met annealing to the multipartite primer-binding site (PBS), dimerization of Ty1 RNA and initiation of reverse transcription. The protein is Transposon Ty1-NL1 Gag polyprotein (TY1A-NL1) of Saccharomyces cerevisiae (strain ATCC 204508 / S288c) (Baker's yeast).